The following is an 856-amino-acid chain: DNA mismatch repair protein MutS (856 aa).

618 to 625 contributes to the ATP binding site; it reads GPNMGGKS.

Belongs to the DNA mismatch repair MutS family.

This protein is involved in the repair of mismatches in DNA. It is possible that it carries out the mismatch recognition step. This protein has a weak ATPase activity. In Shewanella baltica (strain OS155 / ATCC BAA-1091), this protein is DNA mismatch repair protein MutS.